The chain runs to 382 residues: Elloramycin glycosyltransferase ElmGT (382 aa).

Belongs to the glycosyltransferase 28 family.

It carries out the reaction 8-demethyltetracenomycin C + dTDP-beta-L-rhamnose = 8-demethyl-8-alpha-L-rhamnosyl-tetracenomycin C + dTDP + H(+). It functions in the pathway antibiotic biosynthesis. In terms of biological role, glycosyltransferase that transfers an L-rhamnose moiety from dTDP-L-rhamnose to the elloramycin aglycone 8-demethyl-tetracenomycin C (8DMTC) in elloramycin biosynthesis, an antitumor polyketide. Possesses donor substrate flexibility: able to transfer at least 11 different sugars to 8DMTC, such as NDP-D-glucose, as well as NDP-L-digitoxose, including both L- and D-isomeric forms of some sugars. In Streptomyces olivaceus, this protein is Elloramycin glycosyltransferase ElmGT.